The sequence spans 220 residues: Urease accessory protein UreF (220 aa).

The protein belongs to the UreF family. In terms of assembly, ureD, UreF and UreG form a complex that acts as a GTP-hydrolysis-dependent molecular chaperone, activating the urease apoprotein by helping to assemble the nickel containing metallocenter of UreC. The UreE protein probably delivers the nickel.

It localises to the cytoplasm. Its function is as follows. Required for maturation of urease via the functional incorporation of the urease nickel metallocenter. The polypeptide is Urease accessory protein UreF (Bordetella bronchiseptica (strain ATCC BAA-588 / NCTC 13252 / RB50) (Alcaligenes bronchisepticus)).